Reading from the N-terminus, the 350-residue chain is Methylthioribose-1-phosphate isomerase (350 aa).

Substrate is bound by residues 47 to 49 (RGA), arginine 89, and glutamine 196. Aspartate 237 functions as the Proton donor in the catalytic mechanism. A substrate-binding site is contributed by 247–248 (NK).

It belongs to the eIF-2B alpha/beta/delta subunits family. MtnA subfamily.

It catalyses the reaction 5-(methylsulfanyl)-alpha-D-ribose 1-phosphate = 5-(methylsulfanyl)-D-ribulose 1-phosphate. It functions in the pathway amino-acid biosynthesis; L-methionine biosynthesis via salvage pathway; L-methionine from S-methyl-5-thio-alpha-D-ribose 1-phosphate: step 1/6. Catalyzes the interconversion of methylthioribose-1-phosphate (MTR-1-P) into methylthioribulose-1-phosphate (MTRu-1-P). The chain is Methylthioribose-1-phosphate isomerase from Nitratidesulfovibrio vulgaris (strain DSM 19637 / Miyazaki F) (Desulfovibrio vulgaris).